The chain runs to 198 residues: MMADTLILASLSSYRAQLLKKAGLNFLIEGASFDEREIGKIEKVKTPKELSCFLASAKAKNVSDRFPDALVIGCDQVLDLEGQIFHKVTSKKEAYQRLCTLSGKTHSLHSAVALFRNGRKIWVEAFSAHMSVRPLSSKFIKRYLAYVGTDVLNSVGVYQIEGEGIHLFEKIDGDFFTIIGLPLLPLLVKLRHLGIICD.

Asp75 functions as the Proton acceptor in the catalytic mechanism.

This sequence belongs to the Maf family. YceF subfamily. A divalent metal cation serves as cofactor.

It is found in the cytoplasm. It catalyses the reaction N(7)-methyl-GTP + H2O = N(7)-methyl-GMP + diphosphate + H(+). Its function is as follows. Nucleoside triphosphate pyrophosphatase that hydrolyzes 7-methyl-GTP (m(7)GTP). May have a dual role in cell division arrest and in preventing the incorporation of modified nucleotides into cellular nucleic acids. The sequence is that of 7-methyl-GTP pyrophosphatase from Bartonella quintana (strain Toulouse) (Rochalimaea quintana).